The chain runs to 456 residues: Putative F-box/LRR-repeat protein At3g18150 (456 aa).

The region spanning 30–78 (VDSISSLPDVILQHILSFIPTKLAITTSLLSKRWRHVWCDTPSLSFNDY) is the F-box domain. LRR repeat units follow at residues 177–202 (TCLL…TLDH), 203–213 (CGGLRVLDLSK), 228–253 (VPEL…KLPC), 278–303 (KADF…TLGG), 333–358 (IFQY…TLLT), and 396–422 (CLDV…DKMV).

The chain is Putative F-box/LRR-repeat protein At3g18150 from Arabidopsis thaliana (Mouse-ear cress).